The following is a 388-amino-acid chain: G2/mitotic-specific cyclin-B (388 aa).

The protein belongs to the cyclin family. Cyclin AB subfamily. Interacts with the CDK1 protein kinase to form a serine/threonine kinase holoenzyme complex also known as maturation promoting factor (MPF). The cyclin subunit imparts substrate specificity to the complex.

In terms of biological role, essential for the control of the cell cycle at the G2/M (mitosis) transition. The protein is G2/mitotic-specific cyclin-B of Marthasterias glacialis (Spiny starfish).